Consider the following 1059-residue polypeptide: Microtubule-associated protein 1S (1059 aa).

Positions 1–797 (MAAVAGSGAA…SESLPTLSDS (797 aa)) are necessary for the microtubule-organizing center localization. S321 and S472 each carry phosphoserine. Disordered regions lie at residues 461 to 733 (PQDL…ASPH) and 751 to 942 (VPMA…SATP). Basic and acidic residues-rich tracts occupy residues 466–486 (GPGR…KREG) and 494–530 (PGQE…KDPK). Over residues 547–557 (SVPNLKKTNAQ) the composition is skewed to polar residues. At S582 the chain carries Phosphoserine. Residues 591 to 603 (ASPPSAACGSPAS) are compositionally biased toward low complexity. T638 is subject to Phosphothreonine. Residue S640 is modified to Phosphoserine. Residues 642–652 (ESHRSPAEGSE) show a composition bias toward basic and acidic residues. Phosphoserine occurs at positions 655 and 657. The tract at residues 666–1059 (PDASPTVTTP…DAFPACKVEF (394 aa)) is necessary for interaction with RASSF1 isoform A and isoform C. A compositionally biased stretch (low complexity) spans 670–680 (PTVTTPTVTTP). Residues 714–966 (EAGLSLPLRG…GSSAHLVDEE (253 aa)) form a necessary for association with microtubules region. Residues S731 and S759 each carry the phosphoserine modification. Residues 759-769 (SPGSSNDSSAR) are compositionally biased toward low complexity. The segment covering 783–796 (PPTSVSESLPTLSD) has biased composition (polar residues). S809 bears the Phosphoserine mark. Over residues 825–836 (PDPLKVPPPLPD) the composition is skewed to pro residues. Low complexity-rich tracts occupy residues 873–887 (AAAP…AKTK) and 923–936 (TATR…SSRP). Positions 960–1059 (AHLVDEEFFQ…DAFPACKVEF (100 aa)) are necessary for association with actin. Residues 967–991 (FFQRVRALCYVISGQDQRKEEGMRA) form a necessary for the mitochondrial aggregation and genome destruction region.

The protein belongs to the MAP1 family. As to quaternary structure, heterodimer of a heavy and a light chain. Interacts with microtubules and actin. Both MAP1S heavy and light chains interact with microtubules. MAP1S light chain interacts with actin. Interacts (via C-terminus) with GAN (via Kelch domains). Interacts with ESR1, LRPPRC, RASSF1 isoform A and isoform C, microtubules and VCY2. Interacts with WDR47 (via N-terminus of light chain). In terms of tissue distribution, expressed in neurons (at protein level). Expressed in spermatocytes, spermatids and spermatozoa. Expressed in the cerebral cortex. Highly expressed in testis. Moderately expressed in the brain, colon, heart, kidney, liver, lung, placenta, small intestine, spleen and stomach. Weakly expressed in muscle.

It is found in the nucleus. Its subcellular location is the cytoplasm. It localises to the cytosol. The protein resides in the cytoskeleton. The protein localises to the spindle. Functionally, microtubule-associated protein that mediates aggregation of mitochondria resulting in cell death and genomic destruction (MAGD). Plays a role in anchoring the microtubule organizing center to the centrosomes. Binds to DNA. Plays a role in apoptosis. Involved in the formation of microtubule bundles. This chain is Microtubule-associated protein 1S (MAP1S), found in Homo sapiens (Human).